The chain runs to 102 residues: MLTVCWFLYLVRTADNALYTGITTDVGRRFLEHQTGKGAKALRGKGELSLAFSAPVGERSLALKMEYRIKQLTKRQKERLVAGDGSFEALYESLQTPPVKRD.

The 76-residue stretch at 4 to 79 folds into the GIY-YIG domain; it reads VCWFLYLVRT…KQLTKRQKER (76 aa).

This sequence belongs to the UPF0213 family.

This Enterobacter sp. (strain 638) protein is UPF0213 protein Ent638_3592.